Reading from the N-terminus, the 139-residue chain is Small ribosomal subunit protein bS6 (139 aa).

A compositionally biased stretch (basic and acidic residues) spans 95–121; the sequence is AVTEQSEMLKAEESRNERRERRERPND. The interval 95–139 is disordered; it reads AVTEQSEMLKAEESRNERRERRERPNDNAEGADGDDNSDSDNADE. Residues 124–139 are compositionally biased toward acidic residues; it reads EGADGDDNSDSDNADE.

Belongs to the bacterial ribosomal protein bS6 family.

Functionally, binds together with bS18 to 16S ribosomal RNA. This Pseudomonas aeruginosa (strain LESB58) protein is Small ribosomal subunit protein bS6.